Reading from the N-terminus, the 309-residue chain is Aspartate carbamoyltransferase catalytic subunit (309 aa).

2 residues coordinate carbamoyl phosphate: Arg-57 and Thr-58. Lys-86 is a binding site for L-aspartate. Positions 107, 135, and 138 each coordinate carbamoyl phosphate. Arg-168 and Arg-228 together coordinate L-aspartate. 2 residues coordinate carbamoyl phosphate: Leu-267 and Pro-268.

It belongs to the aspartate/ornithine carbamoyltransferase superfamily. ATCase family. Heterooligomer of catalytic and regulatory chains.

The catalysed reaction is carbamoyl phosphate + L-aspartate = N-carbamoyl-L-aspartate + phosphate + H(+). It functions in the pathway pyrimidine metabolism; UMP biosynthesis via de novo pathway; (S)-dihydroorotate from bicarbonate: step 2/3. Its function is as follows. Catalyzes the condensation of carbamoyl phosphate and aspartate to form carbamoyl aspartate and inorganic phosphate, the committed step in the de novo pyrimidine nucleotide biosynthesis pathway. The sequence is that of Aspartate carbamoyltransferase catalytic subunit from Nitrosopumilus maritimus (strain SCM1).